The following is a 252-amino-acid chain: MILAVDIGNTNIVIGLMEGTETVDTYRITTRSNHTSDEYGLMILQFLQLSNSSPDDVQDAIISSVVPKVMHSFISSMIKFLGIDPMIIGPGIKTGMNIRMDDPRSLGADLLADCAGAYTTYGGPVLVIDMGTATTYNYVDEKGAILAGLITTGIGTAAAALASNTAQLPEVQITRPKSILAANTKDAMQAGLYYDCLGGIERTITQFREELDTDFKVVATGGMSRIFDCPLIDIVDPTLIFKGMASIYAKNV.

6–13 is a binding site for ATP; it reads DIGNTNIV. Position 107–110 (107–110) interacts with substrate; sequence GADL. Aspartate 109 acts as the Proton acceptor in catalysis. Aspartate 129 provides a ligand contact to K(+). Threonine 132 serves as a coordination point for ATP. Residue threonine 184 participates in substrate binding.

This sequence belongs to the type III pantothenate kinase family. As to quaternary structure, homodimer. The cofactor is NH4(+). K(+) is required as a cofactor.

Its subcellular location is the cytoplasm. The enzyme catalyses (R)-pantothenate + ATP = (R)-4'-phosphopantothenate + ADP + H(+). It functions in the pathway cofactor biosynthesis; coenzyme A biosynthesis; CoA from (R)-pantothenate: step 1/5. In terms of biological role, catalyzes the phosphorylation of pantothenate (Pan), the first step in CoA biosynthesis. The polypeptide is Type III pantothenate kinase (Bifidobacterium animalis subsp. lactis (strain AD011)).